Consider the following 351-residue polypeptide: Basic salivary proline-rich protein 3 (351 aa).

A signal peptide spans 1 to 16 (MLLILLSVALLALSSA). Position 17 is a pyrrolidone carboxylic acid (Gln17). The interval 17 to 351 (QSLNEDVSQE…HRPPQGQPPQ (335 aa)) is disordered. Residues 20-31 (NEDVSQEESPSV) show a composition bias toward polar residues. Position 24 is a phosphoserine (Ser24). 12 consecutive repeat copies span residues 53-73 (PPGKPEGRPPQGGNQSQGPPP), 74-94 (RPGKPEGPPPQGGNQSQGPPP), 95-115 (RPGKPEGQPPQGGNQSQGPPP), 116-136 (RPGKPEGPPPQGGNQSQGPPP), 137-157 (RPGKPEGPPPQGGNQSQGPPP), 158-178 (RPGKPEGPPPQGGNQSQGPPP), 179-199 (HPGKPEGPPPQGGNQSQGPPP), 200-220 (RPGKPEGPPPQGGNQSQGPPP), 221-241 (RPGKPEGPPPQGGNKPQGPPP), 242-261 (RPGKPEGPPPQGGNQSQGPP), 263-283 (RPGKPEGPPSQGGNKPQGPPP), and 284-304 (HPGKPQGPPPQEGNKPQRPPP). Residues 53-304 (PPGKPEGRPP…EGNKPQRPPP (252 aa)) form a 12 X 21 AA tandem repeats of [RHP]-P-G-K-P-[EQ]-G-[PQS]-P-[PS]-Q-[GE]-G-N-[QK]-[SP]-[QR]-[GR]-P-P-P region. Asn66 carries N-linked (GlcNAc...) asparagine glycosylation. Pro residues predominate over residues 70-84 (GPPPRPGKPEGPPPQ). N-linked (GlcNAc...) asparagine glycosylation is present at Asn87. O-linked (Hex) serine glycosylation is present at Ser89. A compositionally biased stretch (low complexity) spans 99 to 111 (PEGQPPQGGNQSQ). A glycan (N-linked (GlcNAc...) asparagine) is linked at Asn108. Residues 112–126 (GPPPRPGKPEGPPPQ) are compositionally biased toward pro residues. Asn129 carries an N-linked (GlcNAc...) asparagine glycan. Over residues 133–147 (GPPPRPGKPEGPPPQ) the composition is skewed to pro residues. N-linked (GlcNAc...) asparagine glycosylation occurs at Asn150. Composition is skewed to pro residues over residues 154-168 (GPPPRPGKPEGPPPQ) and 175-189 (GPPPHPGKPEGPPPQ). N-linked (GlcNAc...) asparagine glycosylation is present at Asn192. Over residues 196-210 (GPPPRPGKPEGPPPQ) the composition is skewed to pro residues. Residues Asn213 and Asn234 are each glycosylated (N-linked (GlcNAc...) asparagine). Pro residues-rich tracts occupy residues 217–252 (GPPPRPGKPEGPPPQGGNKPQGPPPRPGKPEGPPPQ), 259–270 (GPPPRPGKPEGP), and 279–351 (QGPP…QPPQ). Asn297 carries N-linked (Hex) asparagine; atypical glycosylation.

N- and O-glycosylated; contains about 50% carbohydrate. This is composed of highly fucosylated N-linked saccharides, the major structure is a biantennary asialosaccharide containing 2 fucose residues on one antenna and an unsubstituted terminal lactosamine sequence on the other. The Gram-negative bacterium F.nucleatum binds to carbohydrates containing unsubstituted GalBeta1,4GlcNAc residues. N-glycosylation on Asn-87 is prevalent in head and neck cancer patients. In terms of processing, proteolytically cleaved at the tripeptide Xaa-Pro-Gln, where Xaa in the P(3) position is mostly lysine. The endoprotease may be of microbial origin. Besides on the N-terminal of mature PRB3, pyroglutamate formation found on at least Gln-67, Gln-88, Gln-256 and Gln-337.

The protein resides in the secreted. Acts as a receptor for the Gram-negative bacterium F.nucleatum. The protein is Basic salivary proline-rich protein 3 (PRB3) of Homo sapiens (Human).